Consider the following 152-residue polypeptide: Cytochrome c-type biogenesis protein CcmE 2 (152 aa).

Over 1–8 the chain is Cytoplasmic; it reads MNPQRRRR. A helical; Signal-anchor for type II membrane protein membrane pass occupies residues 9-29; sequence LWLVLALVLAGGLATTLVAMA. Topologically, residues 30-152 are periplasmic; sequence LQRNVAYLYT…HQVAPAKVTQ (123 aa). Residues His123 and Tyr127 each contribute to the heme site.

Belongs to the CcmE/CycJ family.

Its subcellular location is the cell inner membrane. Heme chaperone required for the biogenesis of c-type cytochromes. Transiently binds heme delivered by CcmC and transfers the heme to apo-cytochromes in a process facilitated by CcmF and CcmH. The chain is Cytochrome c-type biogenesis protein CcmE 2 from Xanthomonas campestris pv. campestris (strain 8004).